Here is a 948-residue protein sequence, read N- to C-terminus: Protocadherin alpha-2 (948 aa).

An N-terminal signal peptide occupies residues 1–22; that stretch reads MASSIRRGLGAWTRLLSLLLLA. The Extracellular portion of the chain corresponds to 23-697; sequence AWEVGSGQLR…GSEATLVDVN (675 aa). 6 Cadherin domains span residues 30–133, 157–242, 243–350, 351–455, 456–565, and 588–678; these read QLRY…PPVF, ASDA…EPTF, AQSV…TPEV, SITS…APAF, AQPE…APAL, and GHVV…APKA. Asn257, Asn265, Asn362, and Asn548 each carry an N-linked (GlcNAc...) asparagine glycan. The chain crosses the membrane as a helical span at residues 698–718; it reads VYLIIAICAVSSLLVLTVLLY. At 719–948 the chain is on the cytoplasmic side; sequence TALRCSVPAT…GNSTTDNSDQ (230 aa). The stretch at 734–737 is one PXXP 1 repeat; sequence PGKP. A 5 X 4 AA repeats of P-X-X-P region spans residues 734–892; the sequence is PGKPTLVCSS…PDKFIIPGSP (159 aa). Disordered stretches follow at residues 755-801, 829-854, and 868-948; these read RQRV…RQPN, GPGGPDQQWPTVSSATPEPEAGEVSP, and KYGP…NSDQ. Positions 783 to 795 are enriched in basic and acidic residues; it reads AEEKQLSESEYVG. PXXP repeat units lie at residues 797-800, 830-833, 871-874, and 889-892; these read PRQP, PGGP, PGNP, and PGSP. Basic and acidic residues predominate over residues 907 to 921; it reads DKSDFITFGKKEETK.

It localises to the cell membrane. Potential calcium-dependent cell-adhesion protein. May be involved in the establishment and maintenance of specific neuronal connections in the brain. This is Protocadherin alpha-2 (PCDHA2) from Pan troglodytes (Chimpanzee).